The following is a 452-amino-acid chain: Tubulin beta-2 chain (452 aa).

GTP contacts are provided by Gln-11, Glu-72, Ser-141, Gly-145, Thr-146, Gly-147, Asn-207, and Asn-229. Residue Glu-72 participates in Mg(2+) binding. A disordered region spans residues 414-452 (AESNMNDPVAEYQQYQDATADDEEEYDDEAADDHHQYES). The segment covering 432 to 444 (TADDEEEYDDEAA) has biased composition (acidic residues).

It belongs to the tubulin family. In terms of assembly, dimer of alpha and beta chains. A typical microtubule is a hollow water-filled tube with an outer diameter of 25 nm and an inner diameter of 15 nM. Alpha-beta heterodimers associate head-to-tail to form protofilaments running lengthwise along the microtubule wall with the beta-tubulin subunit facing the microtubule plus end conferring a structural polarity. Microtubules usually have 13 protofilaments but different protofilament numbers can be found in some organisms and specialized cells. Requires Mg(2+) as cofactor.

The protein resides in the cytoplasm. It is found in the cytoskeleton. Functionally, tubulin is the major constituent of microtubules, a cylinder consisting of laterally associated linear protofilaments composed of alpha- and beta-tubulin heterodimers. Microtubules grow by the addition of GTP-tubulin dimers to the microtubule end, where a stabilizing cap forms. Below the cap, tubulin dimers are in GDP-bound state, owing to GTPase activity of alpha-tubulin. The chain is Tubulin beta-2 chain (TUBB2) from Solanum tuberosum (Potato).